We begin with the raw amino-acid sequence, 447 residues long: UPF0210 protein LBUL_0934 (447 aa).

This sequence belongs to the UPF0210 family. Homodimer.

The polypeptide is UPF0210 protein LBUL_0934 (Lactobacillus delbrueckii subsp. bulgaricus (strain ATCC BAA-365 / Lb-18)).